Here is a 163-residue protein sequence, read N- to C-terminus: Neurotrophin-3 (163 aa).

An N-terminal signal peptide occupies residues I1–S3. A propeptide spanning residues T4–R119 is cleaved from the precursor. N112 carries N-linked (GlcNAc...) asparagine glycosylation.

It belongs to the NGF-beta family.

The protein localises to the secreted. Its function is as follows. Seems to promote the survival of visceral and proprioceptive sensory neurons. The polypeptide is Neurotrophin-3 (NTF3) (Chilabothrus striatus (Haitian boa constrictor)).